We begin with the raw amino-acid sequence, 624 residues long: Alpha-galactosidase 3 (624 aa).

A signal peptide spans 1-22 (MSPSAAVLIPLAAAVLLRPVVG). N-linked (GlcNAc...) asparagine glycans are attached at residues Asn-37, Asn-56, Asn-197, Asn-259, and Asn-293. Asp-347 functions as the Nucleophile in the catalytic mechanism. Residue Asn-393 is glycosylated (N-linked (GlcNAc...) asparagine). Asp-412 functions as the Proton donor in the catalytic mechanism. N-linked (GlcNAc...) asparagine glycosylation occurs at Asn-469.

The protein belongs to the glycosyl hydrolase 27 family.

The protein localises to the secreted. The catalysed reaction is Hydrolysis of terminal, non-reducing alpha-D-galactose residues in alpha-D-galactosides, including galactose oligosaccharides, galactomannans and galactolipids.. Alpha-galactosidase involved in the degradation of simple oligosaccharides like melibiose, raffinose and stachyose, and of polymeric galacto(gluco)mannans. The sequence is that of Alpha-galactosidase 3 (agl3) from Hypocrea jecorina (Trichoderma reesei).